The primary structure comprises 119 residues: Protein yippee-like 1 (119 aa).

The region spanning 19–116 (RTYSCIHCRA…IELAHMIKDN (98 aa)) is the Yippee domain. Zn(2+) contacts are provided by C23, C26, C79, and C82. Positions 99–104 (KYKEGK) match the Nuclear localization signal motif.

The protein belongs to the yippee family.

It localises to the nucleus. Its function is as follows. May play a role in epithelioid conversion of fibroblasts. The sequence is that of Protein yippee-like 1 (YPEL1) from Chlorocebus aethiops (Green monkey).